A 535-amino-acid chain; its full sequence is Cytochrome c oxidase subunit 1 (535 aa).

A helical membrane pass occupies residues 15–37 (IAILYFIFSTFCGLAGTAMSFII). 3 residues coordinate Ca(2+): Glu-40, Ala-43, and Gly-45. 5 consecutive transmembrane segments (helical) span residues 58–80 (VLVT…IGGF), 147–169 (LAIF…FIVT), 190–212 (ILIT…TMLL), 238–260 (WFFG…SHIV), and 267–289 (PVFG…FLVW). Position 63 (His-63) interacts with Fe(II)-heme a. His-242 is a Cu cation binding site. Positions 242–246 (HPEVY) form a cross-link, 1'-histidyl-3'-tyrosine (His-Tyr). Residue Tyr-246 participates in O2 binding. The Cu cation site is built by His-291 and His-292. The next 2 membrane-spanning stretches (helical) occupy residues 304–326 (AYFT…SWLT) and 339–361 (MLYT…VLAN). His-369 and Asp-370 together coordinate Mg(2+). Helical transmembrane passes span 376-398 (THFH…YYWS) and 415-437 (FWLI…INGM). A heme a3-binding site is contributed by His-377. His-379 is a binding site for Fe(II)-heme a. Residue Pro-442 participates in Ca(2+) binding. The chain crosses the membrane as a helical span at residues 452 to 474 (NLVSSFGSMMTIMSLMLFTYIIY).

The protein belongs to the heme-copper respiratory oxidase family. As to quaternary structure, component of the cytochrome c oxidase (complex IV, CIV), a multisubunit enzyme composed of a catalytic core of 3 subunits and several supernumerary subunits. The complex exists as a monomer or a dimer and forms supercomplexes (SCs) in the inner mitochondrial membrane with ubiquinol-cytochrome c oxidoreductase (cytochrome b-c1 complex, complex III, CIII). Requires heme as cofactor. The cofactor is Cu cation.

The protein resides in the mitochondrion inner membrane. The catalysed reaction is 4 Fe(II)-[cytochrome c] + O2 + 8 H(+)(in) = 4 Fe(III)-[cytochrome c] + 2 H2O + 4 H(+)(out). The protein operates within energy metabolism; oxidative phosphorylation. In terms of biological role, component of the cytochrome c oxidase, the last enzyme in the mitochondrial electron transport chain which drives oxidative phosphorylation. The respiratory chain contains 3 multisubunit complexes succinate dehydrogenase (complex II, CII), ubiquinol-cytochrome c oxidoreductase (cytochrome b-c1 complex, complex III, CIII) and cytochrome c oxidase (complex IV, CIV), that cooperate to transfer electrons derived from NADH and succinate to molecular oxygen, creating an electrochemical gradient over the inner membrane that drives transmembrane transport and the ATP synthase. Cytochrome c oxidase is the component of the respiratory chain that catalyzes the reduction of oxygen to water. Electrons originating from reduced cytochrome c in the intermembrane space (IMS) are transferred via the dinuclear copper A center (CU(A)) of subunit 2 and heme A of subunit 1 to the active site in subunit 1, a binuclear center (BNC) formed by heme A3 and copper B (CU(B)). The BNC reduces molecular oxygen to 2 water molecules using 4 electrons from cytochrome c in the IMS and 4 protons from the mitochondrial matrix. The protein is Cytochrome c oxidase subunit 1 (COX1) of Eremothecium gossypii (strain ATCC 10895 / CBS 109.51 / FGSC 9923 / NRRL Y-1056) (Yeast).